The chain runs to 443 residues: Chromosome partition protein MukF (443 aa).

Residues 209 to 237 (LDETSGNLRELQDTLNAAGDKLQAQLLRI) form a leucine-zipper region.

The protein belongs to the MukF family. As to quaternary structure, interacts, and probably forms a ternary complex, with MukE and MukB via its C-terminal region. The complex formation is stimulated by calcium or magnesium. It is required for an interaction between MukE and MukB.

It is found in the cytoplasm. Its subcellular location is the nucleoid. In terms of biological role, involved in chromosome condensation, segregation and cell cycle progression. May participate in facilitating chromosome segregation by condensation DNA from both sides of a centrally located replisome during cell division. Not required for mini-F plasmid partitioning. Probably acts via its interaction with MukB and MukE. Overexpression results in anucleate cells. It has a calcium binding activity. The chain is Chromosome partition protein MukF from Actinobacillus pleuropneumoniae serotype 5b (strain L20).